The chain runs to 121 residues: Small ribosomal subunit protein uS13 (121 aa).

A disordered region spans residues 94–121 (GLPVRGQNTKNNARTRKGKAVAIAGKKK). The segment covering 106-121 (ARTRKGKAVAIAGKKK) has biased composition (basic residues).

The protein belongs to the universal ribosomal protein uS13 family. In terms of assembly, part of the 30S ribosomal subunit. Forms a loose heterodimer with protein S19. Forms two bridges to the 50S subunit in the 70S ribosome.

Functionally, located at the top of the head of the 30S subunit, it contacts several helices of the 16S rRNA. In the 70S ribosome it contacts the 23S rRNA (bridge B1a) and protein L5 of the 50S subunit (bridge B1b), connecting the 2 subunits; these bridges are implicated in subunit movement. Contacts the tRNAs in the A and P-sites. The protein is Small ribosomal subunit protein uS13 of Streptococcus sanguinis (strain SK36).